The sequence spans 608 residues: MNTPTRHPTPNVTTGALPASRKIYVAGEMHEGIRVPMREIATHPTAGEAPLPVYDSSGPYTDPDVSTDIREGLAPLRAAWIKARCDVEAYSGRDVTAADNGFVEGDRLVPEFPVKPAPLRGRQRAAPTQLAYARAGIITPEMEFVAIRENQLRDLSPCHCARDGEDFGANIPDYVTPEFVRAEIAAGRAIIPANINHPELEPMIIGRNFKVKINANMGTSSVTSSMEEEVDKLVWAIRWGADTVMDLSTGRNIHNTREWIIRNSPVPIGTVPIYQALEKVNGIAEDLTWEVFRDTLIEQAEQGVDYFTIHAGVRLHMVPMTVERVTGIVSRGGSIMAKWCLHHHRESFLYEHFEEICDICRQYDVSFSLGDGLRPGSIADANDAAQFAELETLGELTKIAWAKDCQVMIEGPGHVAMHKIKENMDKQLECCHEAPFYTLGPLTTDIAPGYDHITSGIGAAMIGWFGCAMLCYVTPKEHLGLPDRDDVKTGVITYKIAAHAADLAKGLPGAQRRDDALSRARFEFRWEDQFNLSLDPETAQSFHDETLPKEAHKVAHFCSMCGPKFCSMRISHDIRAEAQKEGFEAMAAKFREGGELYVPLKDTAPEEA.

Substrate-binding positions include Asn216, Met245, Tyr274, His310, 330 to 332 (SRG), 371 to 374 (DGLR), and Glu410. Residue His414 coordinates Zn(2+). Tyr437 serves as a coordination point for substrate. His478 contributes to the Zn(2+) binding site. [4Fe-4S] cluster-binding residues include Cys558, Cys561, and Cys566.

This sequence belongs to the ThiC family. In terms of assembly, homodimer. The cofactor is [4Fe-4S] cluster.

It carries out the reaction 5-amino-1-(5-phospho-beta-D-ribosyl)imidazole + S-adenosyl-L-methionine = 4-amino-2-methyl-5-(phosphooxymethyl)pyrimidine + CO + 5'-deoxyadenosine + formate + L-methionine + 3 H(+). Its pathway is cofactor biosynthesis; thiamine diphosphate biosynthesis. Its function is as follows. Catalyzes the synthesis of the hydroxymethylpyrimidine phosphate (HMP-P) moiety of thiamine from aminoimidazole ribotide (AIR) in a radical S-adenosyl-L-methionine (SAM)-dependent reaction. The chain is Phosphomethylpyrimidine synthase from Ruegeria sp. (strain TM1040) (Silicibacter sp.).